A 571-amino-acid chain; its full sequence is Alpha-1D adrenergic receptor (571 aa).

The Extracellular portion of the chain corresponds to 1–94 (MTFRDLLSVN…AVGGLVVSAQ (94 aa)). The segment at 13–75 (GSRSDGSAGG…SSAGEPGAAG (63 aa)) is disordered. The segment covering 19 to 34 (SAGGASAGGSGGGSGG) has biased composition (gly residues). Residues 35–47 (AAASEGRAVDGVP) show a composition bias toward low complexity. Residues 48 to 57 (GTAGSGGVVG) show a composition bias toward gly residues. Residues Asn-64 and Asn-81 are each glycosylated (N-linked (GlcNAc...) asparagine). Residues 95–120 (GVGVGVFLAAFILMAVAGNLLVILSV) traverse the membrane as a helical segment. Topologically, residues 121–132 (ACNRHLQTVTNY) are cytoplasmic. The chain crosses the membrane as a helical span at residues 133–158 (FIVNLAVADLLLSATVLPFSATMEVL). The Extracellular segment spans residues 159–168 (GFWAFGRAFC). Residues 169-191 (DVWAAVDVLCCTASILSLCTISV) form a helical membrane-spanning segment. The Cytoplasmic segment spans residues 192 to 212 (DRYVGVRHSLKYPSIMTERKA). A helical transmembrane segment spans residues 213–237 (AAILALLWAVAIVVSVGPLLGWKEP). Residues 238–250 (VPPDERFCGITEE) lie on the Extracellular side of the membrane. A helical membrane pass occupies residues 251 to 274 (AGYAVFSSLCSFYLPMAVIVVMYC). At 275 to 348 (RVYVVARSTT…KFSREKKAAK (74 aa)) the chain is on the cytoplasmic side. The helical transmembrane segment at 349–373 (TLAIVVGVFVLCWFPFFFVLPLGSL) threads the bilayer. Residues 374 to 380 (FPQLKPS) are Extracellular-facing. The helical transmembrane segment at 381–405 (EGVFKVIFWLGYFNSCVNPLIYPCS) threads the bilayer. At 406-571 (SREFKRAFLR…DYSHLRETDI (166 aa)) the chain is on the cytoplasmic side. The S-palmitoyl cysteine moiety is linked to residue Cys-419. The disordered stretch occupies residues 465–487 (LPAPEATDTPSAPEAQAPVVGRR).

It belongs to the G-protein coupled receptor 1 family. Adrenergic receptor subfamily. ADRA1D sub-subfamily. As to quaternary structure, interacts with FLNA (via filamin repeat 21); increases PKA-mediated phosphorylation of FLNA. In terms of processing, palmitoylated. Palmitoylation by ZDHHC21 may increase the expression of the receptor and regulate downstream signaling.

It is found in the cell membrane. In terms of biological role, this alpha-adrenergic receptor mediates its effect through the influx of extracellular calcium. The sequence is that of Alpha-1D adrenergic receptor (ADRA1D) from Sus scrofa (Pig).